The sequence spans 445 residues: 3-phosphoshikimate 1-carboxyvinyltransferase (445 aa).

The 3-phosphoshikimate site is built by Lys-28, Ser-29, and Arg-33. Position 28 (Lys-28) interacts with phosphoenolpyruvate. The phosphoenolpyruvate site is built by Gly-102 and Arg-130. 3-phosphoshikimate contacts are provided by Ser-179, Ser-180, Gln-181, Glu-330, and His-357. Gln-181 contacts phosphoenolpyruvate. The Proton acceptor role is filled by Glu-330. Residues Arg-361, Arg-405, and Lys-430 each contribute to the phosphoenolpyruvate site.

It belongs to the EPSP synthase family. Monomer.

Its subcellular location is the cytoplasm. It carries out the reaction 3-phosphoshikimate + phosphoenolpyruvate = 5-O-(1-carboxyvinyl)-3-phosphoshikimate + phosphate. The protein operates within metabolic intermediate biosynthesis; chorismate biosynthesis; chorismate from D-erythrose 4-phosphate and phosphoenolpyruvate: step 6/7. Catalyzes the transfer of the enolpyruvyl moiety of phosphoenolpyruvate (PEP) to the 5-hydroxyl of shikimate-3-phosphate (S3P) to produce enolpyruvyl shikimate-3-phosphate and inorganic phosphate. The sequence is that of 3-phosphoshikimate 1-carboxyvinyltransferase from Bifidobacterium longum (strain DJO10A).